Here is a 106-residue protein sequence, read N- to C-terminus: UPF0145 protein BF0270 (106 aa).

This sequence belongs to the UPF0145 family.

This is UPF0145 protein BF0270 from Bacteroides fragilis (strain YCH46).